Consider the following 113-residue polypeptide: Class I hydrophobin POH3 (113 aa).

The signal sequence occupies residues 1 to 21; the sequence is MFSRVIFCTFLILPLLAAATA. Cystine bridges form between cysteine 32-cysteine 92, cysteine 39-cysteine 86, cysteine 40-cysteine 73, and cysteine 93-cysteine 106. Asparagine 110 is a glycosylation site (N-linked (GlcNAc...) asparagine).

The protein belongs to the fungal hydrophobin family. In terms of assembly, self-assembles to form functional amyloid fibrils called rodlets. Self-assembly into fibrillar rodlets occurs spontaneously at hydrophobic:hydrophilic interfaces and the rodlets further associate laterally to form amphipathic monolayers. As to expression, expressionn is switched off in the fruiting bodies but abundantly expressed in the vegetative mycelium of both monokaryon and dikaryon.

The protein localises to the secreted. The protein resides in the cell wall. Aerial growth, conidiation, and dispersal of filamentous fungi in the environment rely upon a capability of their secreting small amphipathic proteins called hydrophobins (HPBs) with low sequence identity. Class I can self-assemble into an outermost layer of rodlet bundles on aerial cell surfaces, conferring cellular hydrophobicity that supports fungal growth, development and dispersal; whereas Class II form highly ordered films at water-air interfaces through intermolecular interactions but contribute nothing to the rodlet structure. POH3 is a class I hydrophobin that causes a large drop in the water-surface tension, enabling hyphae to breach the interface and grow into the air, in both the primary and the secondary mycelium. In the latter mycelium POH3 maight also play a role in the emergence of fruiting bodies. Secreted POH3 could also play a role in facilitating lignin degradation. The sequence is that of Class I hydrophobin POH3 from Pleurotus ostreatus (Oyster mushroom).